Reading from the N-terminus, the 164-residue chain is Disulfide bond formation protein B (164 aa).

Residues 1–4 are Cytoplasmic-facing; it reads MRII. A helical transmembrane segment spans residues 5–21; it reads FLLIALICAGLVSYALY. The Periplasmic portion of the chain corresponds to 22 to 39; that stretch reads LQLADGLLPCPLCIFQRM. A disulfide bond links Cys31 and Cys34. The helical transmembrane segment at 40 to 56 threads the bilayer; it reads AYWLVGITALFAFIHHP. The Cytoplasmic portion of the chain corresponds to 57 to 62; that stretch reads QRLGRR. Residues 63-80 traverse the membrane as a helical segment; the sequence is IYCGLIILFSLAGAIVAG. The Periplasmic portion of the chain corresponds to 81–136; the sequence is RQAWLVRFPEAFECGISPEEAFLNELPLARWWPDMFEANGDCTDGTWQFLSLTIPD. Cysteines 94 and 122 form a disulfide. Residues 137-155 traverse the membrane as a helical segment; that stretch reads WSLLIFLAFSLIAGLLWRS. The Cytoplasmic portion of the chain corresponds to 156–164; the sequence is RSISSSNLK.

Belongs to the DsbB family.

It localises to the cell inner membrane. Required for disulfide bond formation in some periplasmic proteins. Acts by oxidizing the DsbA protein. The protein is Disulfide bond formation protein B of Nitrosomonas europaea (strain ATCC 19718 / CIP 103999 / KCTC 2705 / NBRC 14298).